The sequence spans 115 residues: Large ribosomal subunit protein bL19 (115 aa).

It belongs to the bacterial ribosomal protein bL19 family.

Its function is as follows. This protein is located at the 30S-50S ribosomal subunit interface and may play a role in the structure and function of the aminoacyl-tRNA binding site. The polypeptide is Large ribosomal subunit protein bL19 (Lawsonia intracellularis (strain PHE/MN1-00)).